Consider the following 1197-residue polypeptide: Disease resistance-like protein CSA1 (1197 aa).

Positions 15–178 (PQDQVFINFR…IIIRKVKEIL (164 aa)) constitute a TIR domain. The active site involves Glu-89. Residues 210 to 480 (RIKQLEEKLR…ACFRSQDENY (271 aa)) form the NB-ARC domain. 10 LRR repeats span residues 614-636 (LNEV…DFNP), 638-659 (NLVD…NKDA), 694-716 (TALK…NLRG), 728-749 (LISL…QVIS), 750-774 (DKLE…RLQR), 776-796 (VMLN…LGQL), 797-819 (KALE…TWGN), 820-843 (MSRL…LSVR), 845-862 (LCLN…LLNK), and 863-889 (FSQL…NLQY).

It catalyses the reaction NAD(+) + H2O = ADP-D-ribose + nicotinamide + H(+). Its function is as follows. TIR-NB-LRR receptor-like protein that functions in photomorphogenic development. May function downstream of phytochrome B (phyB) signaling. This Arabidopsis thaliana (Mouse-ear cress) protein is Disease resistance-like protein CSA1.